Reading from the N-terminus, the 334-residue chain is Malate dehydrogenase (334 aa).

16-22 (GAAGQIA) is a binding site for NAD(+). Residues arginine 97 and arginine 103 each coordinate substrate. Residues asparagine 110, glutamine 117, and 134–136 (VGN) contribute to the NAD(+) site. Substrate is bound by residues asparagine 136 and arginine 167. The active-site Proton acceptor is histidine 192.

It belongs to the LDH/MDH superfamily. MDH type 2 family.

The enzyme catalyses (S)-malate + NAD(+) = oxaloacetate + NADH + H(+). Catalyzes the reversible oxidation of malate to oxaloacetate. This Nocardia farcinica (strain IFM 10152) protein is Malate dehydrogenase.